The sequence spans 410 residues: uncharacterized protein (410 aa).

The N-terminal stretch at 1 to 41 (MVKSFRMKALIAGAAVAAAVSAGAVSDVPAAKVLQPTAAYA) is a signal peptide.

As to quaternary structure, interacts with PcrA, Pdp, YclM, YkvL, YhcQ and YomL. The interaction with PcrA is not essential for cell viability or repair of UV-induced lesions.

The protein localises to the secreted. Functionally, increases the processivity of the PcrA helicase, but does not bind to DNA. This is an uncharacterized protein from Bacillus subtilis (strain 168).